We begin with the raw amino-acid sequence, 400 residues long: Imidazolonepropionase (400 aa).

Fe(3+) is bound by residues His70 and His72. 2 residues coordinate Zn(2+): His70 and His72. 4-imidazolone-5-propanoate is bound by residues Arg79, Tyr142, and His175. Residue Tyr142 coordinates N-formimidoyl-L-glutamate. His239 serves as a coordination point for Fe(3+). Zn(2+) is bound at residue His239. Residue Gln242 coordinates 4-imidazolone-5-propanoate. Asp314 is a binding site for Fe(3+). Asp314 contacts Zn(2+). N-formimidoyl-L-glutamate contacts are provided by Asn316 and Gly318. A 4-imidazolone-5-propanoate-binding site is contributed by Thr319.

The protein belongs to the metallo-dependent hydrolases superfamily. HutI family. Zn(2+) serves as cofactor. The cofactor is Fe(3+).

It localises to the cytoplasm. The enzyme catalyses 4-imidazolone-5-propanoate + H2O = N-formimidoyl-L-glutamate. It functions in the pathway amino-acid degradation; L-histidine degradation into L-glutamate; N-formimidoyl-L-glutamate from L-histidine: step 3/3. Functionally, catalyzes the hydrolytic cleavage of the carbon-nitrogen bond in imidazolone-5-propanoate to yield N-formimidoyl-L-glutamate. It is the third step in the universal histidine degradation pathway. This is Imidazolonepropionase from Methylobacterium sp. (strain 4-46).